The sequence spans 672 residues: DNA ligase (672 aa).

Residues 35-39 (DAEYD), 84-85 (SL), and E116 each bind NAD(+). K118 serves as the catalytic N6-AMP-lysine intermediate. R139, E179, K295, and K319 together coordinate NAD(+). C413, C416, C431, and C436 together coordinate Zn(2+). One can recognise a BRCT domain in the interval 593–672 (PRSAPLTGKT…EEFLRLAGKI (80 aa)).

This sequence belongs to the NAD-dependent DNA ligase family. LigA subfamily. Mg(2+) serves as cofactor. It depends on Mn(2+) as a cofactor.

The enzyme catalyses NAD(+) + (deoxyribonucleotide)n-3'-hydroxyl + 5'-phospho-(deoxyribonucleotide)m = (deoxyribonucleotide)n+m + AMP + beta-nicotinamide D-nucleotide.. Functionally, DNA ligase that catalyzes the formation of phosphodiester linkages between 5'-phosphoryl and 3'-hydroxyl groups in double-stranded DNA using NAD as a coenzyme and as the energy source for the reaction. It is essential for DNA replication and repair of damaged DNA. In Syntrophus aciditrophicus (strain SB), this protein is DNA ligase.